We begin with the raw amino-acid sequence, 269 residues long: Signal recognition particle receptor subunit beta (269 aa).

A helical membrane pass occupies residues 35–55 (LLSVAVALLAVLLTLVFWKFI). Residues 69 to 77 (GLCDSGKTL) and 90 to 93 (TQTS) contribute to the GTP site. Ser-110 is subject to Phosphoserine. GTP is bound by residues Gly-118 and 178–181 (NKQD). Thr-212 is subject to Phosphothreonine. Ala-246 contacts GTP.

It belongs to the SRP receptor beta subunit family. As to quaternary structure, heterodimer with SRPRA.

It is found in the endoplasmic reticulum membrane. Component of the SRP (signal recognition particle) receptor. Ensures, in conjunction with the signal recognition particle, the correct targeting of the nascent secretory proteins to the endoplasmic reticulum membrane system. May mediate the membrane association of SR. This chain is Signal recognition particle receptor subunit beta (Srprb), found in Mus musculus (Mouse).